The primary structure comprises 287 residues: Alpha-tubulin N-acetyltransferase 2 (287 aa).

Positions 2 to 193 (VEFAFDIKHL…NNFVLYEGFF (192 aa)) constitute an N-acetyltransferase domain. Acetyl-CoA is bound by residues 127-140 (FYVH…GQGK) and 163-172 (SNKMLAFMAK).

The protein belongs to the acetyltransferase ATAT1 family.

Its subcellular location is the midbody. It is found in the midbody ring. The enzyme catalyses L-lysyl-[alpha-tubulin] + acetyl-CoA = N(6)-acetyl-L-lysyl-[alpha-tubulin] + CoA + H(+). Functionally, specifically acetylates 'Lys-40' in alpha-tubulin on the lumenal side of microtubules. Promotes microtubule destabilization and accelerates microtubule dynamics; this activity may be independent of acetylation activity. Acetylates alpha-tubulin with a slow enzymatic rate, due to a catalytic site that is not optimized for acetyl transfer. Enters the microtubule through each end and diffuses quickly throughout the lumen of microtubules. Acetylates only long/old microtubules because of its slow acetylation rate since it does not have time to act on dynamically unstable microtubules before the enzyme is released. Main acetyltransferase responsible for alpha-tubulin 'Lys-40' acetylation in germline cells during the early stages of oogenesis. Required for normal egg chamber separation. The sequence is that of Alpha-tubulin N-acetyltransferase 2 from Drosophila melanogaster (Fruit fly).